Consider the following 64-residue polypeptide: MPKMKSKKSLAKRVIAKKNGTLKRGKAYRSHRATGKTTKQKRHLEKATIVHVTDMKRIKGLLQK.

Positions 1–43 are disordered; that stretch reads MPKMKSKKSLAKRVIAKKNGTLKRGKAYRSHRATGKTTKQKRH.

Belongs to the bacterial ribosomal protein bL35 family.

The sequence is that of Large ribosomal subunit protein bL35 from Mesoplasma florum (strain ATCC 33453 / NBRC 100688 / NCTC 11704 / L1) (Acholeplasma florum).